The following is a 105-amino-acid chain: Thioredoxin (105 aa).

The Thioredoxin domain occupies 1–105 (MVNNVTDSSF…SLLDWINKSI (105 aa)). Residues C30 and C33 are joined by a disulfide bond.

It belongs to the thioredoxin family.

Component of the thioredoxin-thioredoxin reductase system. Participates in various redox reactions through the reversible oxidation of its active center dithiol to a disulfide and catalyzes dithiol-disulfide exchange reactions. In Rickettsia prowazekii (strain Madrid E), this protein is Thioredoxin (trxA).